A 232-amino-acid chain; its full sequence is Oxidoreductase 1 (232 aa).

This sequence belongs to the MQO family. FAD serves as cofactor.

Oxidoreductase; part of the gene cluster that mediates the biosynthesis of elsinochromes, pigments consisting of at least four interconvertible tautomers (A, B, C and D) that have a core phenolic quinone to which various side chains are attached and which play an important role in fungal pathogenesis. The non-reducing polyketide synthase PKS1 was proposed to iteratively catalyze decarboxylation between acetyl-CoA and malonyl-CoA subunits for polyketide chain elongation. The released polyketide undergoes cyclization to form an aromatic ring, and proceeds via serial modification steps to produce the heptaketide back- bone of elsinochrome. As elsinochrome has a symmetrical structure, two identical heptaketides are fused to form a core 1,2-dihydrobenzo-perylene ring structure, which can then be successively modified to produce the various derivatives of elsinochrome. Some of these reactions may be cooperatively carried out, at least in part, by the products of RDT1, OXR1 and PKS1. PRF1, embedded within the elsinochrome cluster possibly functions to stabilize some of the biosynthetic enzymes required for elsinochrome production. As prefoldin is a hexamer containing 2 a and 4 b subunits, additional prefoldin subunits, whose coding genes may not immediately link to the elsinochrome biosynthetic gene cluster, are required to fulfill the chaperone function. In addition, no methyltransferase-coding gene exists within the biosynthetic gene cluster, even though elsinochrome has four methyl groups at positions C3, C7, C8 and C12. Apparently, the identified gene cluster does not contain the entire entourage of genes responsible for elsinochrome biosynthesis. Once elsinochrome is synthesized, it must be exported outside the fungal cells, which is probably accomplished by the ECT1 transporter, to avoid toxicity. The polypeptide is Oxidoreductase 1 (Elsinoe fawcettii (Citrus scab fungus)).